The chain runs to 357 residues: UDP-N-acetylglucosamine--N-acetylmuramyl-(pentapeptide) pyrophosphoryl-undecaprenol N-acetylglucosamine transferase (357 aa).

UDP-N-acetyl-alpha-D-glucosamine contacts are provided by residues 10–12 (TGG), Asn-124, Ser-189, Ile-244, and Gln-289.

This sequence belongs to the glycosyltransferase 28 family. MurG subfamily.

The protein resides in the cell membrane. It catalyses the reaction Mur2Ac(oyl-L-Ala-gamma-D-Glu-L-Lys-D-Ala-D-Ala)-di-trans,octa-cis-undecaprenyl diphosphate + UDP-N-acetyl-alpha-D-glucosamine = beta-D-GlcNAc-(1-&gt;4)-Mur2Ac(oyl-L-Ala-gamma-D-Glu-L-Lys-D-Ala-D-Ala)-di-trans,octa-cis-undecaprenyl diphosphate + UDP + H(+). It participates in cell wall biogenesis; peptidoglycan biosynthesis. Functionally, cell wall formation. Catalyzes the transfer of a GlcNAc subunit on undecaprenyl-pyrophosphoryl-MurNAc-pentapeptide (lipid intermediate I) to form undecaprenyl-pyrophosphoryl-MurNAc-(pentapeptide)GlcNAc (lipid intermediate II). This is UDP-N-acetylglucosamine--N-acetylmuramyl-(pentapeptide) pyrophosphoryl-undecaprenol N-acetylglucosamine transferase from Lactococcus lactis subsp. lactis (strain IL1403) (Streptococcus lactis).